The chain runs to 125 residues: Fluoride-specific ion channel FluC (125 aa).

The next 4 helical transmembrane spans lie at 4-24 (ILLVGAGGALGSVLRYLVGLW), 32-52 (AFPWGTLFVNVTGSFLIGFLA), 68-88 (FLITGVLGGYTTFSAFSLDAI), and 100-120 (LAYIVASVGLSMLAVFAGLAL). 2 residues coordinate Na(+): G75 and T78.

The protein belongs to the fluoride channel Fluc/FEX (TC 1.A.43) family.

Its subcellular location is the cell inner membrane. The catalysed reaction is fluoride(in) = fluoride(out). Its activity is regulated as follows. Na(+) is not transported, but it plays an essential structural role and its presence is essential for fluoride channel function. Functionally, fluoride-specific ion channel. Important for reducing fluoride concentration in the cell, thus reducing its toxicity. The sequence is that of Fluoride-specific ion channel FluC from Rhizobium meliloti (strain 1021) (Ensifer meliloti).